A 378-amino-acid polypeptide reads, in one-letter code: Erythronate-4-phosphate dehydrogenase (378 aa).

Positions 45 and 66 each coordinate substrate. Residues Asp146 and Thr175 each contribute to the NAD(+) site. Arg208 is an active-site residue. NAD(+) is bound at residue Asp232. Glu237 is a catalytic residue. His254 functions as the Proton donor in the catalytic mechanism. Residue Gly257 coordinates NAD(+). Residue Tyr258 coordinates substrate.

It belongs to the D-isomer specific 2-hydroxyacid dehydrogenase family. PdxB subfamily. As to quaternary structure, homodimer.

It localises to the cytoplasm. The enzyme catalyses 4-phospho-D-erythronate + NAD(+) = (R)-3-hydroxy-2-oxo-4-phosphooxybutanoate + NADH + H(+). It functions in the pathway cofactor biosynthesis; pyridoxine 5'-phosphate biosynthesis; pyridoxine 5'-phosphate from D-erythrose 4-phosphate: step 2/5. Functionally, catalyzes the oxidation of erythronate-4-phosphate to 3-hydroxy-2-oxo-4-phosphonooxybutanoate. The sequence is that of Erythronate-4-phosphate dehydrogenase from Salmonella paratyphi A (strain ATCC 9150 / SARB42).